The chain runs to 389 residues: Galactokinase (389 aa).

33–36 (EHTD) is a binding site for substrate. ATP-binding positions include Ser-67 and 124-130 (GAGLSSS). Mg(2+) is bound by residues Ser-130 and Glu-162. Asp-174 serves as the catalytic Proton acceptor. A substrate-binding site is contributed by Tyr-224.

The protein belongs to the GHMP kinase family. GalK subfamily.

It localises to the cytoplasm. It catalyses the reaction alpha-D-galactose + ATP = alpha-D-galactose 1-phosphate + ADP + H(+). The protein operates within carbohydrate metabolism; galactose metabolism. Its function is as follows. Catalyzes the transfer of the gamma-phosphate of ATP to D-galactose to form alpha-D-galactose-1-phosphate (Gal-1-P). The chain is Galactokinase from Fusobacterium nucleatum subsp. nucleatum (strain ATCC 25586 / DSM 15643 / BCRC 10681 / CIP 101130 / JCM 8532 / KCTC 2640 / LMG 13131 / VPI 4355).